An 80-amino-acid polypeptide reads, in one-letter code: Teretoxin Tan6.1 (80 aa).

Positions 1–21 are cleaved as a signal peptide; the sequence is MATSGRLLCLCLVLGLVFESL. Positions 22 to 34 are excised as a propeptide; sequence GHPGARLPKDGKR.

Belongs to the teretoxin M (TM) superfamily. In terms of processing, contains 3 disulfide bonds. As to expression, expressed by the venom duct.

Its subcellular location is the secreted. The sequence is that of Teretoxin Tan6.1 from Terebra anilis (Auger snail).